Here is a 383-residue protein sequence, read N- to C-terminus: Succinyl-diaminopimelate desuccinylase (383 aa).

A Zn(2+)-binding site is contributed by H69. D71 is a catalytic residue. D103 lines the Zn(2+) pocket. E137 acts as the Proton acceptor in catalysis. 3 residues coordinate Zn(2+): E138, E166, and H357.

Belongs to the peptidase M20A family. DapE subfamily. As to quaternary structure, homodimer. It depends on Zn(2+) as a cofactor. Requires Co(2+) as cofactor.

The catalysed reaction is N-succinyl-(2S,6S)-2,6-diaminopimelate + H2O = (2S,6S)-2,6-diaminopimelate + succinate. It participates in amino-acid biosynthesis; L-lysine biosynthesis via DAP pathway; LL-2,6-diaminopimelate from (S)-tetrahydrodipicolinate (succinylase route): step 3/3. Functionally, catalyzes the hydrolysis of N-succinyl-L,L-diaminopimelic acid (SDAP), forming succinate and LL-2,6-diaminopimelate (DAP), an intermediate involved in the bacterial biosynthesis of lysine and meso-diaminopimelic acid, an essential component of bacterial cell walls. The polypeptide is Succinyl-diaminopimelate desuccinylase (Rickettsia typhi (strain ATCC VR-144 / Wilmington)).